The chain runs to 131 residues: Small ribosomal subunit protein uS8 (131 aa).

This sequence belongs to the universal ribosomal protein uS8 family. Part of the 30S ribosomal subunit. Contacts proteins S5 and S12.

Functionally, one of the primary rRNA binding proteins, it binds directly to 16S rRNA central domain where it helps coordinate assembly of the platform of the 30S subunit. The chain is Small ribosomal subunit protein uS8 from Neorickettsia sennetsu (strain ATCC VR-367 / Miyayama) (Ehrlichia sennetsu).